Consider the following 692-residue polypeptide: Vitamin B12-dependent ribonucleoside-diphosphate reductase (692 aa).

One can recognise an ATP-cone domain in the interval 7–95 (AKVRRRDGTL…IYRQRRAELR (89 aa)). Substrate is bound by residues Ser177, 192–193 (GC), Gly221, 375–379 (NPCGE), and 520–524 (PTGTI). Cys193 and Cys388 are disulfide-bonded. Asn375 acts as the Proton acceptor in catalysis. The active-site Cysteine radical intermediate is Cys377. Glu379 (proton acceptor) is an active-site residue.

It belongs to the ribonucleoside diphosphate reductase class-2 family. The cofactor is adenosylcob(III)alamin.

The enzyme catalyses a 2'-deoxyribonucleoside 5'-diphosphate + [thioredoxin]-disulfide + H2O = a ribonucleoside 5'-diphosphate + [thioredoxin]-dithiol. Functionally, provides the precursors necessary for DNA synthesis. Catalyzes the biosynthesis of deoxyribonucleotides from the corresponding ribonucleotides. The protein is Vitamin B12-dependent ribonucleoside-diphosphate reductase (nrdZ) of Mycobacterium tuberculosis (strain CDC 1551 / Oshkosh).